The following is a 484-amino-acid chain: Glycogen synthase (484 aa).

Lys15 contacts ADP-alpha-D-glucose.

It belongs to the glycosyltransferase 1 family. Bacterial/plant glycogen synthase subfamily.

It carries out the reaction [(1-&gt;4)-alpha-D-glucosyl](n) + ADP-alpha-D-glucose = [(1-&gt;4)-alpha-D-glucosyl](n+1) + ADP + H(+). Its pathway is glycan biosynthesis; glycogen biosynthesis. Synthesizes alpha-1,4-glucan chains using ADP-glucose. The protein is Glycogen synthase of Geotalea uraniireducens (strain Rf4) (Geobacter uraniireducens).